Reading from the N-terminus, the 134-residue chain is Small ribosomal subunit protein uS12 (134 aa).

The disordered stretch occupies residues 1 to 30 (MPTINQLVKHGREKVKEKSKSPALQGHPQK). The residue at position 89 (aspartate 89) is a 3-methylthioaspartic acid. Positions 106-134 (GVENRRQSRSKYGAKRPKAGAAAGAKGKK) are disordered. Basic residues predominate over residues 112-123 (QSRSKYGAKRPK). Residues 124–134 (AGAAAGAKGKK) are compositionally biased toward low complexity.

This sequence belongs to the universal ribosomal protein uS12 family. In terms of assembly, part of the 30S ribosomal subunit. Contacts proteins S8 and S17. May interact with IF1 in the 30S initiation complex.

Functionally, with S4 and S5 plays an important role in translational accuracy. Interacts with and stabilizes bases of the 16S rRNA that are involved in tRNA selection in the A site and with the mRNA backbone. Located at the interface of the 30S and 50S subunits, it traverses the body of the 30S subunit contacting proteins on the other side and probably holding the rRNA structure together. The combined cluster of proteins S8, S12 and S17 appears to hold together the shoulder and platform of the 30S subunit. The polypeptide is Small ribosomal subunit protein uS12 (Fervidobacterium nodosum (strain ATCC 35602 / DSM 5306 / Rt17-B1)).